Consider the following 206-residue polypeptide: Small ribosomal subunit protein uS4 (206 aa).

The region spanning 96–156 (TRLDNVVYRM…EKSRTQARIK (61 aa)) is the S4 RNA-binding domain.

It belongs to the universal ribosomal protein uS4 family. Part of the 30S ribosomal subunit. Contacts protein S5. The interaction surface between S4 and S5 is involved in control of translational fidelity.

One of the primary rRNA binding proteins, it binds directly to 16S rRNA where it nucleates assembly of the body of the 30S subunit. Its function is as follows. With S5 and S12 plays an important role in translational accuracy. The sequence is that of Small ribosomal subunit protein uS4 from Shewanella denitrificans (strain OS217 / ATCC BAA-1090 / DSM 15013).